We begin with the raw amino-acid sequence, 307 residues long: Ras-related protein RabR (307 aa).

The segment covering 1–10 (MTTTTLLSES) has biased composition (polar residues). The disordered stretch occupies residues 1-45 (MTTTTLLSESTNNSNNTNNNTNNNTNNTMNNNNNNNNNNTIGNNN). The segment covering 11 to 45 (TNNSNNTNNNTNNNTNNTMNNNNNNNNNNTIGNNN) has biased composition (low complexity). Residue 61–68 (GDEEVGKG) coordinates GTP. An Effector region motif is present at residues 83 to 92 (ENLYNIEVDR). 122 to 126 (NFHMH) is a GTP binding site. Positions 175–185 (NFNCQSNSRNS) are enriched in low complexity. Positions 175-223 (NFNCQSNSRNSTNYNRHSVGNHCPNSPQKGEKENNTHSSTAPPAPPPLP) are disordered. A compositionally biased stretch (polar residues) spans 186 to 202 (TNYNRHSVGNHCPNSPQ). GTP is bound at residue 230-233 (NKCD). Cysteine 304 carries the cysteine methyl ester modification. Cysteine 304 carries the S-geranylgeranyl cysteine lipid modification. The propeptide at 305–307 (NLM) is removed in mature form.

It belongs to the small GTPase superfamily. Rab family.

It localises to the cell membrane. This is Ras-related protein RabR (rabR) from Dictyostelium discoideum (Social amoeba).